The primary structure comprises 569 residues: Laccase-6 (569 aa).

Residues 1–29 (MTSSAVPSLFRLSFLLFTLQVMNIGRIGA) form the signal peptide. Plastocyanin-like domains lie at 37–153 (KVQT…PKAS) and 163–315 (NEHT…YIGA). A glycan (N-linked (GlcNAc...) asparagine) is linked at Asn-83. Cu cation-binding residues include His-87, His-89, His-132, and His-134. 6 N-linked (GlcNAc...) asparagine glycosylation sites follow: Asn-208, Asn-303, Asn-319, Asn-392, Asn-438, and Asn-444. The Plastocyanin-like 3 domain maps to 417-553 (DFPTTPEKAY…STMFIVKNGK (137 aa)). Residues His-472, His-475, His-477, His-532, Cys-533, His-534, His-538, and Met-543 each coordinate Cu cation.

This sequence belongs to the multicopper oxidase family. Requires Cu cation as cofactor. As to expression, predominantly expressed in the inflorescence stem, but not in siliques.

The protein resides in the secreted. Its subcellular location is the extracellular space. It is found in the apoplast. The enzyme catalyses 4 hydroquinone + O2 = 4 benzosemiquinone + 2 H2O. Lignin degradation and detoxification of lignin-derived products. In Arabidopsis thaliana (Mouse-ear cress), this protein is Laccase-6 (LAC6).